The following is a 580-amino-acid chain: Glypican-3 (580 aa).

The signal sequence occupies residues 1 to 24 (MAGTVRTACLVVAMLLSLDFPGQA). Glutamine 25 is subject to Pyrrolidone carboxylic acid. 7 disulfides stabilise this stretch: cysteine 35/cysteine 72, cysteine 65/cysteine 262, cysteine 73/cysteine 265, cysteine 197/cysteine 349, cysteine 252/cysteine 285, cysteine 274/cysteine 422, and cysteine 278/cysteine 410. Asparagine 124 and asparagine 241 each carry an N-linked (GlcNAc...) asparagine glycan. At serine 352 the chain carries Phosphoserine. Asparagine 418 carries an N-linked (GlcNAc...) asparagine glycan. 2 O-linked (Xyl...) (glycosaminoglycan) serine glycosylation sites follow: serine 495 and serine 509. Asparagine 554 carries the GPI-anchor amidated asparagine lipid modification. The propeptide at 555 to 580 (LGNVHSPLKLLTSMAISVVCFFFLVH) is removed in mature form.

Belongs to the glypican family. As to quaternary structure, heterodimer; disulfide-linked. Cleavage by a furin-like convertase results in production of alpha and beta chains which form a disulfide-linked heterodimer. Interacts with DPP4. Interacts with FGF2. Interacts with WNT5A. Also interacts with WNT3A and WNT7B. Interacts with hedgehog protein SHH; the heparan sulfate chains are not required for the interaction. Also interacts with hedgehog protein IHH. Interacts with CD81. Interacts with Wnt receptors FZD4, FZD7 and FZD8; the heparan sulfate chains are required for the interaction. O-glycosylated; contains heparan sulfate and/or chondroitin sulfate. Post-translationally, cleaved intracellularly by a furin-like convertase to generate 2 subunits, alpha and beta, which remain associated through disulfide bonds and are associated with the cell surface via the GPI-anchor. This processing is essential for its role in inhibition of hedgehog signaling. A second proteolytic event may result in cleavage of the protein on the cell surface, separating it from the GPI-anchor and leading to its shedding from the cell surface.

The protein resides in the cell membrane. Its function is as follows. Cell surface proteoglycan. Negatively regulates the hedgehog signaling pathway when attached via the GPI-anchor to the cell surface by competing with the hedgehog receptor PTC1 for binding to hedgehog proteins. Binding to the hedgehog protein SHH triggers internalization of the complex by endocytosis and its subsequent lysosomal degradation. Positively regulates the canonical Wnt signaling pathway by binding to the Wnt receptor Frizzled and stimulating the binding of the Frizzled receptor to Wnt ligands. Positively regulates the non-canonical Wnt signaling pathway. Binds to CD81 which decreases the availability of free CD81 for binding to the transcriptional repressor HHEX, resulting in nuclear translocation of HHEX and transcriptional repression. Inhibits the dipeptidyl peptidase activity of DPP4. Plays a role in limb patterning and skeletal development by controlling the cellular response to BMP4. Modulates the effects of growth factors BMP2, BMP7 and FGF7 on renal branching morphogenesis. Required for coronary vascular development. Plays a role in regulating cell movements during gastrulation. The chain is Glypican-3 (GPC3) from Pan troglodytes (Chimpanzee).